A 320-amino-acid chain; its full sequence is MPIIRRTSRATASSSKSATSSILRQAILVFTGFLLGALFMVFVPSLYNAAEPSSLHRLMNPIRRNTLSARASSDILKLGNPGPVSDLLERSGYILSYNRRDRLAHWVGEHLTSASLQAGQGVDRDKSNFQEDTDIPEMFRAHLKDYVSSGYDRGHQAPAADDLSSQEAMDETFLLSNMAPQVGVGFNRHYWAYLEGFMRDLTQNFTDVYVYTGPLFLPSAASTGRKNPAYSIEYPFLGATTPNVPVPTHFFKIALTTTASSEYALGAFVLPNQAIDSSTPLTNFKVELEAIEKAAGLVFFDKLDRSKFADLCSKTTCQVR.

The active-site Proton acceptor is H155. N187 lines the Mg(2+) pocket. N204 carries N-linked (GlcNAc...) asparagine glycosylation. A disulfide bond links C312 and C317.

This sequence belongs to the DNA/RNA non-specific endonuclease family. In terms of assembly, homodimer; as a result of non-covalent interactions and not through the disulfide linkages between the two monomers. Mg(2+) serves as cofactor. The cofactor is Mn(2+). In terms of processing, glycosylated.

Its subcellular location is the secreted. Functionally, this enzyme has both RNase and DNase activity. In Syncephalastrum racemosum (Filamentous fungus), this protein is Nuclease.